The primary structure comprises 313 residues: tRNA dimethylallyltransferase (313 aa).

8–15 (GPTGTGKS) lines the ATP pocket. Substrate is bound at residue 10–15 (TGTGKS).

This sequence belongs to the IPP transferase family. Monomer. It depends on Mg(2+) as a cofactor.

It catalyses the reaction adenosine(37) in tRNA + dimethylallyl diphosphate = N(6)-dimethylallyladenosine(37) in tRNA + diphosphate. In terms of biological role, catalyzes the transfer of a dimethylallyl group onto the adenine at position 37 in tRNAs that read codons beginning with uridine, leading to the formation of N6-(dimethylallyl)adenosine (i(6)A). This is tRNA dimethylallyltransferase from Mycolicibacterium gilvum (strain PYR-GCK) (Mycobacterium gilvum (strain PYR-GCK)).